The chain runs to 106 residues: MSQKTVHDQDNALLLETGNTKVAPPPRYQVLLLNDDYTPMDFVIVVLQQFFAMDLKKATQVMLHVHTRGCGVCGFYTREVAESKVAQVNEFSRIHQHPLLCTMKQA.

Residues 1–10 (MSQKTVHDQD) show a composition bias toward basic and acidic residues. The tract at residues 1–22 (MSQKTVHDQDNALLLETGNTKV) is disordered.

It belongs to the ClpS family. As to quaternary structure, binds to the N-terminal domain of the chaperone ClpA.

In terms of biological role, involved in the modulation of the specificity of the ClpAP-mediated ATP-dependent protein degradation. The chain is ATP-dependent Clp protease adapter protein ClpS from Xylella fastidiosa (strain 9a5c).